The primary structure comprises 150 residues: MANELNSLDIQEILSLLPHRYPMLLVDRVIDFTPGKSLHAIKNVTINEPIFTGHFPNQPIFPGVLILEAMAQATGLLGFKTVENRSENELYLFAAVDNARFKKPVLPGDTMHLHVEFLKERRNLWKFAAEAKVDGKLVCSAEIMCARREF.

His54 is an active-site residue.

It belongs to the thioester dehydratase family. FabZ subfamily.

Its subcellular location is the cytoplasm. It carries out the reaction a (3R)-hydroxyacyl-[ACP] = a (2E)-enoyl-[ACP] + H2O. Functionally, involved in unsaturated fatty acids biosynthesis. Catalyzes the dehydration of short chain beta-hydroxyacyl-ACPs and long chain saturated and unsaturated beta-hydroxyacyl-ACPs. This Pseudoalteromonas translucida (strain TAC 125) protein is 3-hydroxyacyl-[acyl-carrier-protein] dehydratase FabZ.